Reading from the N-terminus, the 105-residue chain is Type VII secretion system extracellular protein D (105 aa).

In terms of assembly, forms heterodimers with EsxB.

It localises to the secreted. The sequence is that of Type VII secretion system extracellular protein D from Staphylococcus aureus (strain USA300).